The sequence spans 506 residues: Histidine ammonia-lyase (506 aa).

Residues 143–145 constitute a cross-link (5-imidazolinone (Ala-Gly)); it reads ASG. Ser-144 bears the 2,3-didehydroalanine (Ser) mark.

This sequence belongs to the PAL/histidase family. Post-translationally, contains an active site 4-methylidene-imidazol-5-one (MIO), which is formed autocatalytically by cyclization and dehydration of residues Ala-Ser-Gly.

The protein resides in the cytoplasm. The catalysed reaction is L-histidine = trans-urocanate + NH4(+). It functions in the pathway amino-acid degradation; L-histidine degradation into L-glutamate; N-formimidoyl-L-glutamate from L-histidine: step 1/3. This is Histidine ammonia-lyase from Salmonella paratyphi A (strain ATCC 9150 / SARB42).